A 301-amino-acid chain; its full sequence is Protoheme IX farnesyltransferase (301 aa).

Helical transmembrane passes span 30–50, 55–75, 106–126, 127–147, 152–172, 177–197, 233–253, and 281–301; these read VISL…PKAI, IIVS…GGMI, AYAI…LANP, LTAL…SIWL, WWNI…GFAA, FTLL…GHFW, ALMV…YLIV, and FKLS…VKLI.

Belongs to the UbiA prenyltransferase family. Protoheme IX farnesyltransferase subfamily.

The protein resides in the cell membrane. It carries out the reaction heme b + (2E,6E)-farnesyl diphosphate + H2O = Fe(II)-heme o + diphosphate. It functions in the pathway porphyrin-containing compound metabolism; heme O biosynthesis; heme O from protoheme: step 1/1. Its function is as follows. Converts heme B (protoheme IX) to heme O by substitution of the vinyl group on carbon 2 of heme B porphyrin ring with a hydroxyethyl farnesyl side group. This chain is Protoheme IX farnesyltransferase, found in Sulfurisphaera tokodaii (strain DSM 16993 / JCM 10545 / NBRC 100140 / 7) (Sulfolobus tokodaii).